We begin with the raw amino-acid sequence, 976 residues long: Leucine--tRNA ligase (976 aa).

Over residues 1–23 (MTESPTTTPGSTSGAPSGVPSGV) the composition is skewed to low complexity. The segment at 1–34 (MTESPTTTPGSTSGAPSGVPSGVNDAESDAPRHR) is disordered. The 'HIGH' region signature appears at 86–97 (PYPSGEGLHVGH). The short motif at 745–749 (KIGKS) is the 'KMSKS' region element. ATP is bound at residue lysine 748.

Belongs to the class-I aminoacyl-tRNA synthetase family.

It localises to the cytoplasm. It catalyses the reaction tRNA(Leu) + L-leucine + ATP = L-leucyl-tRNA(Leu) + AMP + diphosphate. This chain is Leucine--tRNA ligase, found in Mycobacterium marinum (strain ATCC BAA-535 / M).